A 130-amino-acid polypeptide reads, in one-letter code: Small ribosomal subunit protein uS9 (130 aa).

The tract at residues 105–130 is disordered; that stretch reads TRDSRMKERKKPGLKGARRAPQFSKR. The span at 111–130 shows a compositional bias: basic residues; sequence KERKKPGLKGARRAPQFSKR.

Belongs to the universal ribosomal protein uS9 family.

The polypeptide is Small ribosomal subunit protein uS9 (Listeria welshimeri serovar 6b (strain ATCC 35897 / DSM 20650 / CCUG 15529 / CIP 8149 / NCTC 11857 / SLCC 5334 / V8)).